Reading from the N-terminus, the 780-residue chain is Neutral ceramidase (780 aa).

At 1 to 12 (MAKRTFSNLETF) the chain is on the cytoplasmic side. Residues 13 to 33 (LIFLLVMMSAITVALLSLLFI) traverse the membrane as a helical; Signal-anchor for type II membrane protein segment. The Lumenal portion of the chain corresponds to 34–780 (TSGTIENHKD…TSPAFEVVTI (747 aa)). Residues 47 to 90 (HFFSTTQSPPATQGSTAAQRSTATQHSTATQSSTATQTSPVPLT) are disordered. The span at 57–85 (ATQGSTAAQRSTATQHSTATQSSTATQTS) shows a compositional bias: low complexity. O-linked (GalNAc...) threonine glycosylation is present at Thr62. Residue Ser67 is glycosylated (O-linked (GalNAc...) serine). Thr68 and Thr70 each carry an O-linked (GalNAc...) threonine glycan. O-linked (GalNAc...) serine glycosylation is present at Ser73. O-linked (GalNAc...) threonine glycosylation is found at Thr74 and Thr76. Ser78 and Ser79 each carry an O-linked (GalNAc...) serine glycan. 3 O-linked (GalNAc...) threonine glycosylation sites follow: Thr80, Thr82, and Thr84. A glycan (N-linked (GlcNAc...) asparagine) is linked at Asn98. Leu134 provides a ligand contact to Ca(2+). Asn151 carries an N-linked (GlcNAc...) asparagine glycan. Zn(2+) is bound at residue His194. Asn217 carries an N-linked (GlcNAc...) asparagine glycan. A Zn(2+)-binding site is contributed by His303. N-linked (GlcNAc...) asparagine glycosylation occurs at Asn308. The Nucleophile role is filled by Ser354. Cystine bridges form between Cys362/Cys376 and Cys369/Cys384. N-linked (GlcNAc...) asparagine glycans are attached at residues Asn440 and Asn468. A disulfide bond links Cys448 and Cys498. Glu540 lines the Zn(2+) pocket. N-linked (GlcNAc...) asparagine glycosylation is present at Asn564. A Zn(2+)-binding site is contributed by Tyr579. 3 residues coordinate Ca(2+): Asp712, Ser714, and Thr717. Asn730 carries an N-linked (GlcNAc...) asparagine glycan. A required for correct folding and localization region spans residues 770-780 (GTSPAFEVVTI). Thr779 carries an O-linked (GalNAc...) threonine glycan.

It belongs to the neutral ceramidase family. Zn(2+) serves as cofactor. In terms of processing, proteolytic cleavage of the N-terminus removes the signal-anchor and produces a soluble form of the protein. N-glycosylated. Required for enzyme activity. Post-translationally, O-glycosylated. Required to retain it as a type II membrane protein at the cell surface. In terms of processing, phosphorylated. May prevent ubiquitination and subsequent degradation. Ubiquitinated, leading to its degradation by the proteasome. Ubiquitination is triggered by nitric oxide. Primarily expressed in intestine. Ubiquitously expressed with higher levels in kidney, skeletal muscle and heart. The ubiquitous expression observed for ASAH2 might be an experimental artifact due to the paralog ASAH2B.

It localises to the cell membrane. The protein localises to the membrane raft. The protein resides in the membrane. It is found in the caveola. Its subcellular location is the golgi apparatus membrane. It localises to the mitochondrion. The protein localises to the secreted. The protein resides in the extracellular exosome. The catalysed reaction is an N-acylsphing-4-enine + H2O = sphing-4-enine + a fatty acid. The enzyme catalyses N-dodecanoylsphing-4-enine + H2O = dodecanoate + sphing-4-enine. It carries out the reaction N-hexadecanoylsphing-4-enine + H2O = sphing-4-enine + hexadecanoate. It catalyses the reaction N-octanoylsphing-4-enine + H2O = octanoate + sphing-4-enine. The catalysed reaction is N-(hexanoyl)sphing-4-enine + H2O = hexanoate + sphing-4-enine. The enzyme catalyses N-octadecanoylsphing-4-enine + H2O = sphing-4-enine + octadecanoate. It carries out the reaction N-tetradecanoylsphing-4-enine + H2O = tetradecanoate + sphing-4-enine. It catalyses the reaction N-(9Z-octadecenoyl)-sphing-4-enine + H2O = sphing-4-enine + (9Z)-octadecenoate. The catalysed reaction is N-(15Z-tetracosenoyl)-sphing-4-enine + H2O = (15Z)-tetracosenoate + sphing-4-enine. The enzyme catalyses sphinganine + hexadecanoate = N-hexadecanoylsphinganine + H2O. It carries out the reaction N-(octadecanoyl)-sphinganine + H2O = sphinganine + octadecanoate. It participates in lipid metabolism; sphingolipid metabolism. Its activity is regulated as follows. Inhibited by dithiothreitol (DTT) and 2-mercaptoethanol. Activity is mildly stimulated by Ca(2+) and Mg(2+), but is not inhibited by EDTA. Activity is inhibited by millimolar levels of Fe(2+), Zn(2+) and Cu(2+). Inhibited by cholesterol. Functionally, plasma membrane ceramidase that hydrolyzes sphingolipid ceramides into sphingosine and free fatty acids at neutral pH. Ceramides, sphingosine, and its phosphorylated form sphingosine-1-phosphate are bioactive lipids that mediate cellular signaling pathways regulating several biological processes including cell proliferation, apoptosis and differentiation. Also catalyzes the reverse reaction allowing the synthesis of ceramides from fatty acids and sphingosine. Together with sphingomyelinase, participates in the production of sphingosine and sphingosine-1-phosphate from the degradation of sphingomyelin, a sphingolipid enriched in the plasma membrane of cells. Also participates in the hydrolysis of ceramides from the extracellular milieu allowing the production of sphingosine-1-phosphate inside and outside cells. This is the case for instance with the digestion of dietary sphingolipids in the intestinal tract. The protein is Neutral ceramidase (ASAH2) of Homo sapiens (Human).